Reading from the N-terminus, the 47-residue chain is Large ribosomal subunit protein uL14c (47 aa).

The protein belongs to the universal ribosomal protein uL14 family. In terms of assembly, part of the 50S ribosomal subunit.

Its subcellular location is the plastid. It is found in the chloroplast. Functionally, binds to 23S rRNA. The polypeptide is Large ribosomal subunit protein uL14c (rpl14) (Vigna unguiculata (Cowpea)).